A 412-amino-acid polypeptide reads, in one-letter code: F-box/WD repeat-containing protein 4 (412 aa).

Positions 25–71 (GPALWRLPEELLLLICSYLDMRALGRLAQVCRWLRRFTSCDLLWRRI) constitute an F-box domain. WD repeat units lie at residues 154–190 (RPLG…IHKI), 193–229 (TFTV…VWPL), 236–277 (QCLH…IWDL), 283–321 (MTHL…YWDL), 327–366 (KCVM…LWDR), and 373–409 (HAFP…VLDF).

In terms of assembly, part of a SCF (SKP1-cullin-F-box) protein ligase complex. Interacts with POUF51. In terms of tissue distribution, expressed in brain, kidney, lung and liver.

Functionally, probably recognizes and binds to some phosphorylated proteins and promotes their ubiquitination and degradation. Likely to be involved in key signaling pathways crucial for normal limb development. May participate in Wnt signaling. In Homo sapiens (Human), this protein is F-box/WD repeat-containing protein 4 (FBXW4).